A 287-amino-acid polypeptide reads, in one-letter code: Large ribosomal subunit protein uL2 (287 aa).

The disordered stretch occupies residues 221–287 (RGSVMNPCDH…SKRSRGGRDS (67 aa)). Residues 258–287 (KTRKKNKPSNKLVVRRRRRISKRSRGGRDS) show a composition bias toward basic residues.

The protein belongs to the universal ribosomal protein uL2 family. As to quaternary structure, part of the 50S ribosomal subunit. Forms a bridge to the 30S subunit in the 70S ribosome.

One of the primary rRNA binding proteins. Required for association of the 30S and 50S subunits to form the 70S ribosome, for tRNA binding and peptide bond formation. It has been suggested to have peptidyltransferase activity; this is somewhat controversial. Makes several contacts with the 16S rRNA in the 70S ribosome. This Prochlorococcus marinus subsp. pastoris (strain CCMP1986 / NIES-2087 / MED4) protein is Large ribosomal subunit protein uL2.